Reading from the N-terminus, the 219-residue chain is Transmembrane protein 125 (219 aa).

4 consecutive transmembrane segments (helical) span residues 36–56 (LCFA…VALL), 68–88 (LAVG…QLMS), 114–134 (ALVV…LAGL), and 147–167 (MLSV…GLLL).

Its subcellular location is the membrane. The protein is Transmembrane protein 125 (TMEM125) of Bos taurus (Bovine).